The sequence spans 102 residues: Small ribosomal subunit protein eS24 (102 aa).

The protein belongs to the eukaryotic ribosomal protein eS24 family.

In Methanobrevibacter smithii (strain ATCC 35061 / DSM 861 / OCM 144 / PS), this protein is Small ribosomal subunit protein eS24.